A 133-amino-acid polypeptide reads, in one-letter code: Small ribosomal subunit protein uS8 (133 aa).

The protein belongs to the universal ribosomal protein uS8 family. As to quaternary structure, part of the 30S ribosomal subunit. Contacts proteins S5 and S12.

In terms of biological role, one of the primary rRNA binding proteins, it binds directly to 16S rRNA central domain where it helps coordinate assembly of the platform of the 30S subunit. The chain is Small ribosomal subunit protein uS8 from Prochlorococcus marinus (strain MIT 9312).